The sequence spans 266 residues: Large ribosomal subunit protein uL2m (266 aa).

It belongs to the universal ribosomal protein uL2 family.

The protein localises to the mitochondrion. The chain is Large ribosomal subunit protein uL2m (mrpl2) from Dictyostelium discoideum (Social amoeba).